Consider the following 536-residue polypeptide: CTP synthase (536 aa).

The tract at residues 1–268 (MKSKFIFITG…GKVLCKLFNI (268 aa)) is amidoligase domain. Ser14 provides a ligand contact to CTP. Ser14 contributes to the UTP binding site. ATP is bound at residue 15 to 20 (SLGKGL). Tyr55 provides a ligand contact to L-glutamine. Residue Asp72 participates in ATP binding. Mg(2+) contacts are provided by Asp72 and Glu142. CTP contacts are provided by residues 149-151 (DIE), 189-194 (KTKPMQ), and Lys225. Residues 189-194 (KTKPMQ) and Lys225 contribute to the UTP site. One can recognise a Glutamine amidotransferase type-1 domain in the interval 293 to 535 (TIALVGKYVE…IKAAVDNKIN (243 aa)). Gly356 provides a ligand contact to L-glutamine. Cys383 functions as the Nucleophile; for glutamine hydrolysis in the catalytic mechanism. Residues 384-387 (LGMQ), Glu407, and Arg463 each bind L-glutamine. Catalysis depends on residues His508 and Glu510.

It belongs to the CTP synthase family. In terms of assembly, homotetramer.

It catalyses the reaction UTP + L-glutamine + ATP + H2O = CTP + L-glutamate + ADP + phosphate + 2 H(+). It carries out the reaction L-glutamine + H2O = L-glutamate + NH4(+). The catalysed reaction is UTP + NH4(+) + ATP = CTP + ADP + phosphate + 2 H(+). The protein operates within pyrimidine metabolism; CTP biosynthesis via de novo pathway; CTP from UDP: step 2/2. Allosterically activated by GTP, when glutamine is the substrate; GTP has no effect on the reaction when ammonia is the substrate. The allosteric effector GTP functions by stabilizing the protein conformation that binds the tetrahedral intermediate(s) formed during glutamine hydrolysis. Inhibited by the product CTP, via allosteric rather than competitive inhibition. In terms of biological role, catalyzes the ATP-dependent amination of UTP to CTP with either L-glutamine or ammonia as the source of nitrogen. Regulates intracellular CTP levels through interactions with the four ribonucleotide triphosphates. The protein is CTP synthase of Treponema denticola (strain ATCC 35405 / DSM 14222 / CIP 103919 / JCM 8153 / KCTC 15104).